A 240-amino-acid polypeptide reads, in one-letter code: Uridylate kinase (240 aa).

13 to 16 (KFSG) contacts ATP. Residue Gly-55 coordinates UMP. ATP contacts are provided by Gly-56 and Arg-60. Residues Asp-76 and 137-144 (TGNPFFTT) contribute to the UMP site. ATP contacts are provided by Thr-164, Tyr-170, and Asp-173.

Belongs to the UMP kinase family. Homohexamer.

Its subcellular location is the cytoplasm. It carries out the reaction UMP + ATP = UDP + ADP. It participates in pyrimidine metabolism; CTP biosynthesis via de novo pathway; UDP from UMP (UMPK route): step 1/1. Its activity is regulated as follows. Inhibited by UTP. Functionally, catalyzes the reversible phosphorylation of UMP to UDP. The protein is Uridylate kinase of Helicobacter pylori (strain ATCC 700392 / 26695) (Campylobacter pylori).